The following is a 674-amino-acid chain: Inorganic pyrophosphatase TTM2 (674 aa).

The CYTH domain occupies 248–410 (SPTYILKSRK…PRTYIEQIQL (163 aa)). Disordered stretches follow at residues 457–498 (KNLK…SPAN) and 619–640 (RSRLARTGSSNSGNRGRSSKSS). The segment covering 484 to 496 (SDRRYEERNHDSP) has biased composition (basic and acidic residues). Residues 623–640 (ARTGSSNSGNRGRSSKSS) show a composition bias toward low complexity. Residues 650-670 (LPLVLTVAICSIGIIVIKSYI) traverse the membrane as a helical segment.

The cofactor is Mg(2+). In terms of tissue distribution, predominantly expressed in the shoot apices of inflorescences.

The protein resides in the mitochondrion outer membrane. The catalysed reaction is diphosphate + H2O = 2 phosphate + H(+). In terms of biological role, exhibits pyrophosphatase activity with stronger affinity for pyrophosphate (PPi), moderate affinity for ATP and ADP, and weak affinity for tripolyphosphate (PPPi). No activity observed toward uridine substrate. Negative regulator of the salicylic acid (SA)-mediated amplification of defense responses against both virulent and avirulent pathogens, including oomycetes (e.g. H.arabidopsidis) and bacteria (e.g. P.syringae). Represses systemic acquired resistance (SAR). This chain is Inorganic pyrophosphatase TTM2, found in Arabidopsis thaliana (Mouse-ear cress).